We begin with the raw amino-acid sequence, 542 residues long: Phosphoacetylglucosamine mutase (542 aa).

At Met1 the chain carries N-acetylmethionine. The residue at position 62 (Thr62) is a Phosphothreonine. Ser64 functions as the Phosphoserine intermediate in the catalytic mechanism. Residues Ser64, Asp276, Asp278, and Asp280 each coordinate Mg(2+). Ser64 carries the post-translational modification Phosphoserine. Substrate contacts are provided by residues 370–372 (EAN), 496–500 (RPSGT), and Arg505.

The protein belongs to the phosphohexose mutase family. Mg(2+) is required as a cofactor.

It carries out the reaction N-acetyl-alpha-D-glucosamine 1-phosphate = N-acetyl-D-glucosamine 6-phosphate. The protein operates within nucleotide-sugar biosynthesis; UDP-N-acetyl-alpha-D-glucosamine biosynthesis; N-acetyl-alpha-D-glucosamine 1-phosphate from alpha-D-glucosamine 6-phosphate (route I): step 2/2. Its function is as follows. Catalyzes the conversion of GlcNAc-6-P into GlcNAc-1-P during the synthesis of uridine diphosphate/UDP-GlcNAc, a sugar nucleotide critical to multiple glycosylation pathways including protein N- and O-glycosylation. The chain is Phosphoacetylglucosamine mutase from Mus musculus (Mouse).